The chain runs to 332 residues: Holliday junction branch migration complex subunit RuvB (332 aa).

A large ATPase domain (RuvB-L) region spans residues 1–182 (MKLNKNSELK…FGLILKLNYY (182 aa)). ATP is bound by residues leucine 21, arginine 22, glycine 63, lysine 66, threonine 67, threonine 68, 129–131 (EDY), arginine 172, tyrosine 182, and arginine 219. Position 67 (threonine 67) interacts with Mg(2+). The small ATPAse domain (RuvB-S) stretch occupies residues 183 to 253 (SEDELELIIK…ISEIALEKLT (71 aa)). Residues 256–332 (KNGLDDADYT…FKLFKNDKIK (77 aa)) form a head domain (RuvB-H) region. DNA-binding residues include arginine 311 and arginine 316.

The protein belongs to the RuvB family. Homohexamer. Forms an RuvA(8)-RuvB(12)-Holliday junction (HJ) complex. HJ DNA is sandwiched between 2 RuvA tetramers; dsDNA enters through RuvA and exits via RuvB. An RuvB hexamer assembles on each DNA strand where it exits the tetramer. Each RuvB hexamer is contacted by two RuvA subunits (via domain III) on 2 adjacent RuvB subunits; this complex drives branch migration. In the full resolvosome a probable DNA-RuvA(4)-RuvB(12)-RuvC(2) complex forms which resolves the HJ.

It is found in the cytoplasm. It carries out the reaction ATP + H2O = ADP + phosphate + H(+). In terms of biological role, the RuvA-RuvB-RuvC complex processes Holliday junction (HJ) DNA during genetic recombination and DNA repair, while the RuvA-RuvB complex plays an important role in the rescue of blocked DNA replication forks via replication fork reversal (RFR). RuvA specifically binds to HJ cruciform DNA, conferring on it an open structure. The RuvB hexamer acts as an ATP-dependent pump, pulling dsDNA into and through the RuvAB complex. RuvB forms 2 homohexamers on either side of HJ DNA bound by 1 or 2 RuvA tetramers; 4 subunits per hexamer contact DNA at a time. Coordinated motions by a converter formed by DNA-disengaged RuvB subunits stimulates ATP hydrolysis and nucleotide exchange. Immobilization of the converter enables RuvB to convert the ATP-contained energy into a lever motion, pulling 2 nucleotides of DNA out of the RuvA tetramer per ATP hydrolyzed, thus driving DNA branch migration. The RuvB motors rotate together with the DNA substrate, which together with the progressing nucleotide cycle form the mechanistic basis for DNA recombination by continuous HJ branch migration. Branch migration allows RuvC to scan DNA until it finds its consensus sequence, where it cleaves and resolves cruciform DNA. The chain is Holliday junction branch migration complex subunit RuvB from Phytoplasma mali (strain AT).